The following is a 145-amino-acid chain: MGSIRLMHAKLHRVCVTEANVNYVGSITIDPVMLERVGLLPLEEVDIINLSNGNRFSTYVLPGQAHSKEICPNGGAALLCQPGDRLIIFAYELCDRREVLQKGHQAKVLVTNESNETVDFYLQELIPKEDGVKFINNICSEAIPH.

Ser-26 serves as the catalytic Schiff-base intermediate with substrate; via pyruvic acid. At Ser-26 the chain carries Pyruvic acid (Ser). Thr-58 is a substrate binding site. Catalysis depends on Tyr-59, which acts as the Proton donor. A substrate-binding site is contributed by 74–76 (GGA).

Belongs to the PanD family. As to quaternary structure, heterooctamer of four alpha and four beta subunits. The cofactor is pyruvate. Is synthesized initially as an inactive proenzyme, which is activated by self-cleavage at a specific serine bond to produce a beta-subunit with a hydroxyl group at its C-terminus and an alpha-subunit with a pyruvoyl group at its N-terminus.

Its subcellular location is the cytoplasm. The enzyme catalyses L-aspartate + H(+) = beta-alanine + CO2. The protein operates within cofactor biosynthesis; (R)-pantothenate biosynthesis; beta-alanine from L-aspartate: step 1/1. Functionally, catalyzes the pyruvoyl-dependent decarboxylation of aspartate to produce beta-alanine. The protein is Aspartate 1-decarboxylase of Synechocystis sp. (strain ATCC 27184 / PCC 6803 / Kazusa).